Here is a 554-residue protein sequence, read N- to C-terminus: Potassium-transporting ATPase potassium-binding subunit (554 aa).

10 helical membrane-spanning segments follow: residues 1–21 (MSPV…LALA), 60–80 (PAYL…LYVL), 131–151 (GLAV…VALV), 174–194 (VRVL…CGAI), 246–266 (PGPF…FALT), 279–299 (GYAI…LMMW), 375–395 (GLYG…LMVG), 412–432 (FAAC…AAAM), 481–501 (IGIV…ALAG), and 525–545 (GLLV…ALAL).

It belongs to the KdpA family. The system is composed of three essential subunits: KdpA, KdpB and KdpC.

The protein localises to the cell membrane. Part of the high-affinity ATP-driven potassium transport (or Kdp) system, which catalyzes the hydrolysis of ATP coupled with the electrogenic transport of potassium into the cytoplasm. This subunit binds the extracellular potassium ions and delivers the ions to the membrane domain of KdpB through an intramembrane tunnel. This is Potassium-transporting ATPase potassium-binding subunit from Streptomyces avermitilis (strain ATCC 31267 / DSM 46492 / JCM 5070 / NBRC 14893 / NCIMB 12804 / NRRL 8165 / MA-4680).